The sequence spans 290 residues: Glycine--tRNA ligase alpha subunit (290 aa).

It belongs to the class-II aminoacyl-tRNA synthetase family. Tetramer of two alpha and two beta subunits.

It localises to the cytoplasm. It carries out the reaction tRNA(Gly) + glycine + ATP = glycyl-tRNA(Gly) + AMP + diphosphate. This Prochlorococcus marinus (strain NATL2A) protein is Glycine--tRNA ligase alpha subunit.